Consider the following 398-residue polypeptide: MSKLVLVLNCGSSSLKFAVVDAESGAEHLTGLAECLGLPEARMKWKLDGKHEAQLGAGAAHVEALSFMVETILASKPELKANLGAIGHRIVHGGEQFTKSALITDEVLKGIQDAATFAPLHNPAHIIGIEAAKANFPGLKNVAVFDTAFHQTMPEESYLYALPYNLYKEHGIRRYGMHGTSHLFITREVAGLLNKPVEEVNIINCHLGNGASVCAIKNGESVDTSMGLTPLEGLVMGTRCGDIDPAIVFHLHDALGYSVEQINNMLTKESGLQGLTQVTSDCRFVEDNYGEKEEATRAMDVFCHRLAKYVAGYTATLEGRLDAITFTGGIGENSAPIREMVLNRLGIFGIEVDGEANLKARFGGEGTITTANSRIPAMVISTNEELVIAEDTAKLAGL.

Asparagine 9 provides a ligand contact to Mg(2+). Lysine 16 serves as a coordination point for ATP. Arginine 89 contacts substrate. Aspartate 146 functions as the Proton donor/acceptor in the catalytic mechanism. Residues 206-210 (HLGNG), 281-283 (DCR), and 329-333 (GIGEN) contribute to the ATP site. Residue glutamate 384 coordinates Mg(2+).

Belongs to the acetokinase family. As to quaternary structure, homodimer. Mg(2+) serves as cofactor. The cofactor is Mn(2+).

It is found in the cytoplasm. The enzyme catalyses acetate + ATP = acetyl phosphate + ADP. It participates in metabolic intermediate biosynthesis; acetyl-CoA biosynthesis; acetyl-CoA from acetate: step 1/2. Catalyzes the formation of acetyl phosphate from acetate and ATP. Can also catalyze the reverse reaction. This chain is Acetate kinase 1, found in Aliivibrio fischeri (strain ATCC 700601 / ES114) (Vibrio fischeri).